A 348-amino-acid polypeptide reads, in one-letter code: Peptide-N(4)-(N-acetyl-beta-glucosaminyl)asparagine amidase (348 aa).

The Zn(2+) site is built by cysteine 116, cysteine 119, cysteine 151, and cysteine 154. Catalysis depends on cysteine 177, which acts as the Nucleophile. Active-site residues include histidine 204 and aspartate 221. Glutamate 224 lines the substrate pocket. Positions 311–348 (PSATPTKEMQKLKISKTGNKGRISGSAEWKESRGENGK) are disordered. Residues 338–348 (EWKESRGENGK) are compositionally biased toward basic and acidic residues.

This sequence belongs to the transglutaminase-like superfamily. PNGase family. Zn(2+) is required as a cofactor.

It is found in the cytoplasm. It carries out the reaction Hydrolysis of an N(4)-(acetyl-beta-D-glucosaminyl)asparagine residue in which the glucosamine residue may be further glycosylated, to yield a (substituted) N-acetyl-beta-D-glucosaminylamine and a peptide containing an aspartate residue.. Specifically deglycosylates the denatured form of N-linked glycoproteins in the cytoplasm and assists their proteasome-mediated degradation. Cleaves the beta-aspartyl-glucosamine (GlcNAc) of the glycan and the amide side chain of Asn, converting Asn to Asp. Prefers proteins containing high-mannose over those bearing complex type oligosaccharides. Can recognize misfolded proteins in the endoplasmic reticulum that are exported to the cytosol to be destroyed and deglycosylate them, while it has no activity toward native proteins. Deglycosylation is a prerequisite for subsequent proteasome-mediated degradation of some, but not all, misfolded glycoproteins. This is Peptide-N(4)-(N-acetyl-beta-glucosaminyl)asparagine amidase (PNG1) from Candida glabrata (strain ATCC 2001 / BCRC 20586 / JCM 3761 / NBRC 0622 / NRRL Y-65 / CBS 138) (Yeast).